Consider the following 156-residue polypeptide: 6,7-dimethyl-8-ribityllumazine synthase (156 aa).

Residues F22, 57 to 59 (AVE), and 81 to 83 (CVI) each bind 5-amino-6-(D-ribitylamino)uracil. A (2S)-2-hydroxy-3-oxobutyl phosphate-binding site is contributed by 86–87 (GT). H89 functions as the Proton donor in the catalytic mechanism. F114 provides a ligand contact to 5-amino-6-(D-ribitylamino)uracil. R128 lines the (2S)-2-hydroxy-3-oxobutyl phosphate pocket.

Belongs to the DMRL synthase family. Forms an icosahedral capsid composed of 60 subunits, arranged as a dodecamer of pentamers.

It catalyses the reaction (2S)-2-hydroxy-3-oxobutyl phosphate + 5-amino-6-(D-ribitylamino)uracil = 6,7-dimethyl-8-(1-D-ribityl)lumazine + phosphate + 2 H2O + H(+). It participates in cofactor biosynthesis; riboflavin biosynthesis; riboflavin from 2-hydroxy-3-oxobutyl phosphate and 5-amino-6-(D-ribitylamino)uracil: step 1/2. Catalyzes the formation of 6,7-dimethyl-8-ribityllumazine by condensation of 5-amino-6-(D-ribitylamino)uracil with 3,4-dihydroxy-2-butanone 4-phosphate. This is the penultimate step in the biosynthesis of riboflavin. This Vibrio cholerae serotype O1 (strain ATCC 39315 / El Tor Inaba N16961) protein is 6,7-dimethyl-8-ribityllumazine synthase.